Here is a 150-residue protein sequence, read N- to C-terminus: Large ribosomal subunit protein uL13 (150 aa).

The interval 130–150 (EHPHGAQQPQPYQLNPSASIK) is disordered. The span at 136–150 (QQPQPYQLNPSASIK) shows a compositional bias: polar residues.

This sequence belongs to the universal ribosomal protein uL13 family. In terms of assembly, part of the 50S ribosomal subunit.

Functionally, this protein is one of the early assembly proteins of the 50S ribosomal subunit, although it is not seen to bind rRNA by itself. It is important during the early stages of 50S assembly. The chain is Large ribosomal subunit protein uL13 from Synechococcus sp. (strain RCC307).